The chain runs to 423 residues: Serine--tRNA ligase (423 aa).

An L-serine-binding site is contributed by 231–233 (TGE). Residue 262–264 (RSE) coordinates ATP. Glu285 contacts L-serine. 349–352 (EISS) serves as a coordination point for ATP. Ser385 lines the L-serine pocket.

The protein belongs to the class-II aminoacyl-tRNA synthetase family. Type-1 seryl-tRNA synthetase subfamily. As to quaternary structure, homodimer. The tRNA molecule binds across the dimer.

It is found in the cytoplasm. The catalysed reaction is tRNA(Ser) + L-serine + ATP = L-seryl-tRNA(Ser) + AMP + diphosphate + H(+). It carries out the reaction tRNA(Sec) + L-serine + ATP = L-seryl-tRNA(Sec) + AMP + diphosphate + H(+). It participates in aminoacyl-tRNA biosynthesis; selenocysteinyl-tRNA(Sec) biosynthesis; L-seryl-tRNA(Sec) from L-serine and tRNA(Sec): step 1/1. In terms of biological role, catalyzes the attachment of serine to tRNA(Ser). Is also able to aminoacylate tRNA(Sec) with serine, to form the misacylated tRNA L-seryl-tRNA(Sec), which will be further converted into selenocysteinyl-tRNA(Sec). The sequence is that of Serine--tRNA ligase from Coxiella burnetii (strain CbuK_Q154) (Coxiella burnetii (strain Q154)).